We begin with the raw amino-acid sequence, 183 residues long: Dual-action ribosomal maturation protein DarP (183 aa).

It belongs to the DarP family.

The protein resides in the cytoplasm. In terms of biological role, member of a network of 50S ribosomal subunit biogenesis factors which assembles along the 30S-50S interface, preventing incorrect 23S rRNA structures from forming. Promotes peptidyl transferase center (PTC) maturation. This Shigella flexneri serotype 5b (strain 8401) protein is Dual-action ribosomal maturation protein DarP.